Reading from the N-terminus, the 189-residue chain is Small ribosomal subunit protein uS7 (189 aa).

This sequence belongs to the universal ribosomal protein uS7 family. In terms of assembly, part of the 30S ribosomal subunit.

Functionally, one of the primary rRNA binding proteins, it binds directly to 16S rRNA where it nucleates assembly of the head domain of the 30S subunit. Is located at the subunit interface close to the decoding center. In Methanosarcina mazei (strain ATCC BAA-159 / DSM 3647 / Goe1 / Go1 / JCM 11833 / OCM 88) (Methanosarcina frisia), this protein is Small ribosomal subunit protein uS7.